A 393-amino-acid polypeptide reads, in one-letter code: Dual specificity mitogen-activated protein kinase kinase 1 (393 aa).

The disordered stretch occupies residues methionine 1 to glutamate 27. The Protein kinase domain occupies phenylalanine 68–isoleucine 361. ATP is bound by residues leucine 74 to valine 82 and lysine 97. Aspartate 190 serves as the catalytic Proton acceptor. Residues serine 218 and serine 222 each carry the phosphoserine; by RAF modification. Residues glutamate 270–proline 307 form an RAF1-binding region. Threonine 286 is subject to Phosphothreonine. Threonine 292 is subject to Phosphothreonine; by MAPK1. Serine 298 carries the post-translational modification Phosphoserine; by PAK.

It belongs to the protein kinase superfamily. STE Ser/Thr protein kinase family. MAP kinase kinase subfamily. As to quaternary structure, found in a complex with at least BRAF, HRAS, MAP2K1, MAPK3/ERK1 and RGS14. Forms a heterodimer with MAP2K2/MEK2. Forms heterodimers with KSR2 which further dimerize to form tetramers. Interacts with KSR1 or KSR2 and BRAF; the interaction with KSR1 or KSR2 mediates KSR1-BRAF or KSR2-BRAF dimerization. Interacts with ARBB2, LAMTOR3, MAPK1/ERK2 and RAF1. Interacts with MAPK1/ERK2. Interacts with MORG1. Interacts with PPARG. Interacts with SGK1. Interacts with BIRC6/bruce. Interacts with KAT7; the interaction promotes KAT7 phosphorylation. Interacts with RAF1 and NEK10; the interaction is required for ERK1/2-signaling pathway activation in response to UV irradiation. Interacts with TRAF3IP3. Interacts with MOS. In terms of processing, phosphorylation at Ser-218 and Ser-222 by MAP kinase kinase kinases (RAF or MEKK1) positively regulates the kinase activity. Also phosphorylated at Thr-292 by MAPK1/ERK2 and at Ser-298 by PAK. MAPK1/ERK2 phosphorylation of Thr-292 occurs in response to cellular adhesion and leads to inhibition of Ser-298 phosphorylation by PAK. Autophosphorylated at Ser-218 and Ser-222, autophosphosphorylation is promoted by NEK10 following UV irradiation.

The protein localises to the cytoplasm. Its subcellular location is the cytoskeleton. The protein resides in the microtubule organizing center. It localises to the centrosome. It is found in the spindle pole body. The protein localises to the nucleus. Its subcellular location is the membrane. It carries out the reaction L-seryl-[protein] + ATP = O-phospho-L-seryl-[protein] + ADP + H(+). The catalysed reaction is L-threonyl-[protein] + ATP = O-phospho-L-threonyl-[protein] + ADP + H(+). The enzyme catalyses L-tyrosyl-[protein] + ATP = O-phospho-L-tyrosyl-[protein] + ADP + H(+). With respect to regulation, ras proteins such as HRAS mediate the activation of RAF proteins such as RAF1 or BRAF which in turn activate extracellular signal-regulated kinases (ERK) through MAPK (mitogen-activated protein kinases) and ERK kinases MAP2K1/MEK1 and MAP2K2/MEK2. Activation occurs through phosphorylation of Ser-218 and Ser-222. MAP2K1/MEK1 binds KSR1 or KSR2 releasing the inhibitory intramolecular interaction between KSR1 or KSR2 protein kinase and N-terminal domains. This allows KSR1 or KSR2 dimerization with BRAF leading to BRAF activation and phosphorylation of MAP2K1. MAP2K1/MEK1 is also the target of negative feed-back regulation by its substrate kinases, such as MAPK1/ERK2. These phosphorylate MAP2K1/MEK1 on Thr-292, thereby facilitating dephosphorylation of the activating residues Ser-218 and Ser-222. Inhibited by serine/threonine phosphatase 2A. Its function is as follows. Dual specificity protein kinase which acts as an essential component of the MAP kinase signal transduction pathway. Binding of extracellular ligands such as growth factors, cytokines and hormones to their cell-surface receptors activates RAS and this initiates RAF1 activation. RAF1 then further activates the dual-specificity protein kinases MAP2K1/MEK1 and MAP2K2/MEK2. Both MAP2K1/MEK1 and MAP2K2/MEK2 function specifically in the MAPK/ERK cascade, and catalyze the concomitant phosphorylation of a threonine and a tyrosine residue in a Thr-Glu-Tyr sequence located in the extracellular signal-regulated kinases MAPK3/ERK1 and MAPK1/ERK2, leading to their activation and further transduction of the signal within the MAPK/ERK cascade. Activates BRAF in a KSR1 or KSR2-dependent manner; by binding to KSR1 or KSR2 releases the inhibitory intramolecular interaction between KSR1 or KSR2 protein kinase and N-terminal domains which promotes KSR1 or KSR2-BRAF dimerization and BRAF activation. Depending on the cellular context, this pathway mediates diverse biological functions such as cell growth, adhesion, survival and differentiation, predominantly through the regulation of transcription, metabolism and cytoskeletal rearrangements. One target of the MAPK/ERK cascade is peroxisome proliferator-activated receptor gamma (PPARG), a nuclear receptor that promotes differentiation and apoptosis. MAP2K1/MEK1 has been shown to export PPARG from the nucleus. The MAPK/ERK cascade is also involved in the regulation of endosomal dynamics, including lysosome processing and endosome cycling through the perinuclear recycling compartment (PNRC), as well as in the fragmentation of the Golgi apparatus during mitosis. The sequence is that of Dual specificity mitogen-activated protein kinase kinase 1 (MAP2K1) from Oryctolagus cuniculus (Rabbit).